The chain runs to 295 residues: Bifunctional protein FolD (295 aa).

Residues 175 to 177 (GVS) and I243 each bind NADP(+).

This sequence belongs to the tetrahydrofolate dehydrogenase/cyclohydrolase family. In terms of assembly, homodimer.

It carries out the reaction (6R)-5,10-methylene-5,6,7,8-tetrahydrofolate + NADP(+) = (6R)-5,10-methenyltetrahydrofolate + NADPH. The enzyme catalyses (6R)-5,10-methenyltetrahydrofolate + H2O = (6R)-10-formyltetrahydrofolate + H(+). The protein operates within one-carbon metabolism; tetrahydrofolate interconversion. Catalyzes the oxidation of 5,10-methylenetetrahydrofolate to 5,10-methenyltetrahydrofolate and then the hydrolysis of 5,10-methenyltetrahydrofolate to 10-formyltetrahydrofolate. This chain is Bifunctional protein FolD, found in Xylella fastidiosa (strain 9a5c).